Here is a 420-residue protein sequence, read N- to C-terminus: ATP phosphoribosyltransferase regulatory subunit (420 aa).

Belongs to the class-II aminoacyl-tRNA synthetase family. HisZ subfamily. Heteromultimer composed of HisG and HisZ subunits.

The protein resides in the cytoplasm. The protein operates within amino-acid biosynthesis; L-histidine biosynthesis; L-histidine from 5-phospho-alpha-D-ribose 1-diphosphate: step 1/9. Required for the first step of histidine biosynthesis. May allow the feedback regulation of ATP phosphoribosyltransferase activity by histidine. The sequence is that of ATP phosphoribosyltransferase regulatory subunit from Bacillus cereus (strain G9842).